The primary structure comprises 516 residues: UvrABC system protein C (516 aa).

Positions 9-87 constitute a GIY-YIG domain; that stretch reads HLPGCYLFKD…IKKHWPRYNI (79 aa). The 36-residue stretch at 191-226 folds into the UVR domain; the sequence is GELIESMEKEMKKMAAKQMFEQAMALRDEISALEYL.

It belongs to the UvrC family. Interacts with UvrB in an incision complex.

The protein localises to the cytoplasm. In terms of biological role, the UvrABC repair system catalyzes the recognition and processing of DNA lesions. UvrC both incises the 5' and 3' sides of the lesion. The N-terminal half is responsible for the 3' incision and the C-terminal half is responsible for the 5' incision. The polypeptide is UvrABC system protein C (Methanosarcina acetivorans (strain ATCC 35395 / DSM 2834 / JCM 12185 / C2A)).